We begin with the raw amino-acid sequence, 147 residues long: Arginine repressor (147 aa).

The protein belongs to the ArgR family.

The protein resides in the cytoplasm. It participates in amino-acid biosynthesis; L-arginine biosynthesis [regulation]. Regulates arginine biosynthesis genes. This is Arginine repressor from Chlamydia caviae (strain ATCC VR-813 / DSM 19441 / 03DC25 / GPIC) (Chlamydophila caviae).